The primary structure comprises 304 residues: Acetylglutamate kinase (304 aa).

Residues 70–71 (GG), R92, and N185 contribute to the substrate site.

Belongs to the acetylglutamate kinase family. ArgB subfamily.

Its subcellular location is the cytoplasm. It catalyses the reaction N-acetyl-L-glutamate + ATP = N-acetyl-L-glutamyl 5-phosphate + ADP. It participates in amino-acid biosynthesis; L-arginine biosynthesis; N(2)-acetyl-L-ornithine from L-glutamate: step 2/4. Its function is as follows. Catalyzes the ATP-dependent phosphorylation of N-acetyl-L-glutamate. This chain is Acetylglutamate kinase, found in Paracoccus denitrificans (strain Pd 1222).